The sequence spans 89 residues: Cell division topological specificity factor (89 aa).

The protein belongs to the MinE family.

Its function is as follows. Prevents the cell division inhibition by proteins MinC and MinD at internal division sites while permitting inhibition at polar sites. This ensures cell division at the proper site by restricting the formation of a division septum at the midpoint of the long axis of the cell. The chain is Cell division topological specificity factor from Pectobacterium carotovorum subsp. carotovorum (strain PC1).